The sequence spans 236 residues: Ring protein 1 (236 aa).

As to quaternary structure, homododecamer.

The protein localises to the virion. Forms the tail multi-ring barrel with ring protein 2, ring protein 3 and ring protein 4. In Bacteroides intestinalis (Bacteroides phage PhiCrAss001), this protein is Ring protein 1.